A 373-amino-acid chain; its full sequence is ORC1-type DNA replication protein 2 (373 aa).

ATP contacts are provided by residues 63–67 (TGKTS), Y205, and R217.

Belongs to the CDC6/cdc18 family.

Involved in regulation of DNA replication. The protein is ORC1-type DNA replication protein 2 (cdc6-2) of Methanosarcina mazei (strain ATCC BAA-159 / DSM 3647 / Goe1 / Go1 / JCM 11833 / OCM 88) (Methanosarcina frisia).